The following is a 286-amino-acid chain: Pyridoxal kinase PdxY (286 aa).

Substrate contacts are provided by residues serine 9 and 44–45 (MQ). Residues aspartate 111, glutamate 147, and lysine 180 each contribute to the ATP site. Aspartate 221 contacts substrate.

It belongs to the pyridoxine kinase family. PdxY subfamily. In terms of assembly, homodimer. Mg(2+) serves as cofactor.

The enzyme catalyses pyridoxal + ATP = pyridoxal 5'-phosphate + ADP + H(+). It functions in the pathway cofactor metabolism; pyridoxal 5'-phosphate salvage; pyridoxal 5'-phosphate from pyridoxal: step 1/1. Functionally, pyridoxal kinase involved in the salvage pathway of pyridoxal 5'-phosphate (PLP). Catalyzes the phosphorylation of pyridoxal to PLP. The chain is Pyridoxal kinase PdxY from Burkholderia orbicola (strain AU 1054).